Reading from the N-terminus, the 347-residue chain is Quinolinate synthase (347 aa).

The iminosuccinate site is built by His-47 and Ser-68. Position 113 (Cys-113) interacts with [4Fe-4S] cluster. Iminosuccinate contacts are provided by residues 139-141 (YAN) and Ser-156. Cys-200 lines the [4Fe-4S] cluster pocket. Residues 226–228 (HPE) and Thr-243 each bind iminosuccinate. Cys-297 serves as a coordination point for [4Fe-4S] cluster.

It belongs to the quinolinate synthase family. Type 1 subfamily. [4Fe-4S] cluster is required as a cofactor.

The protein resides in the cytoplasm. The enzyme catalyses iminosuccinate + dihydroxyacetone phosphate = quinolinate + phosphate + 2 H2O + H(+). Its pathway is cofactor biosynthesis; NAD(+) biosynthesis; quinolinate from iminoaspartate: step 1/1. Catalyzes the condensation of iminoaspartate with dihydroxyacetone phosphate to form quinolinate. This is Quinolinate synthase from Escherichia coli O45:K1 (strain S88 / ExPEC).